We begin with the raw amino-acid sequence, 61 residues long: Small ribosomal subunit protein uS14 (61 aa).

Zn(2+) is bound by residues Cys-24, Cys-27, Cys-40, and Cys-43.

The protein belongs to the universal ribosomal protein uS14 family. Zinc-binding uS14 subfamily. As to quaternary structure, part of the 30S ribosomal subunit. Contacts proteins S3 and S10. Requires Zn(2+) as cofactor.

Functionally, binds 16S rRNA, required for the assembly of 30S particles and may also be responsible for determining the conformation of the 16S rRNA at the A site. The sequence is that of Small ribosomal subunit protein uS14 from Syntrophotalea carbinolica (strain DSM 2380 / NBRC 103641 / GraBd1) (Pelobacter carbinolicus).